The following is a 372-amino-acid chain: Cobalt-precorrin-5B C(1)-methyltransferase (372 aa).

It belongs to the CbiD family.

It carries out the reaction Co-precorrin-5B + S-adenosyl-L-methionine = Co-precorrin-6A + S-adenosyl-L-homocysteine. Its pathway is cofactor biosynthesis; adenosylcobalamin biosynthesis; cob(II)yrinate a,c-diamide from sirohydrochlorin (anaerobic route): step 6/10. In terms of biological role, catalyzes the methylation of C-1 in cobalt-precorrin-5B to form cobalt-precorrin-6A. In Geobacillus thermodenitrificans (strain NG80-2), this protein is Cobalt-precorrin-5B C(1)-methyltransferase.